Consider the following 170-residue polypeptide: MIDADGFRPNVGIILTNHQGQLLWARRVGGQDAWQFPQGGINAHESPEQALYRELHEEVGLYPQDVEILACTRGWLRYRLPHRLVRHNSLPLCVGQKQKWFLLRLLSDDARVCLENGGRAEFDDWRWVSYWYPLGKVVAFKRDVYRRALRELSLAHAQLENSNRKELSRG.

One can recognise a Nudix hydrolase domain in the interval 6–150; that stretch reads GFRPNVGIIL…KRDVYRRALR (145 aa). Positions 39–60 match the Nudix box motif; that stretch reads GGINAHESPEQALYRELHEEVG.

This sequence belongs to the Nudix hydrolase family. RppH subfamily. The cofactor is a divalent metal cation.

Accelerates the degradation of transcripts by removing pyrophosphate from the 5'-end of triphosphorylated RNA, leading to a more labile monophosphorylated state that can stimulate subsequent ribonuclease cleavage. This is RNA pyrophosphohydrolase from Cellvibrio japonicus (strain Ueda107) (Pseudomonas fluorescens subsp. cellulosa).